We begin with the raw amino-acid sequence, 441 residues long: Protein arginine methyltransferase NDUFAF7, mitochondrial (441 aa).

The N-terminal 46 residues, 1-46 (MNFLAAAGVRRLCAMRAVLPCLWRGKYFSSGNEPAENNTVTPMLRH), are a transit peptide targeting the mitochondrion. The interval 415–434 (GRNHQTNARQSKPSPSPVAG) is disordered. Over residues 418 to 427 (HQTNARQSKP) the composition is skewed to polar residues.

It belongs to the NDUFAF7 family. Interacts with NDUFS2.

The protein resides in the mitochondrion. The catalysed reaction is L-arginyl-[protein] + 2 S-adenosyl-L-methionine = N(omega),N(omega)'-dimethyl-L-arginyl-[protein] + 2 S-adenosyl-L-homocysteine + 2 H(+). Its function is as follows. Arginine methyltransferase involved in the assembly or stability of mitochondrial NADH:ubiquinone oxidoreductase complex (complex I). Acts by mediating symmetric dimethylation of 'Arg-118' of NDUFS2 after it assembles into the complex I, stabilizing the early intermediate complex. This chain is Protein arginine methyltransferase NDUFAF7, mitochondrial, found in Bos taurus (Bovine).